We begin with the raw amino-acid sequence, 127 residues long: Fluoride-specific ion channel FluC (127 aa).

4 helical membrane-spanning segments follow: residues 4-24, 35-55, 71-91, and 103-123; these read LLLAVFIGGGTGSVARWLLSM, LGTLTANLIGAFIIGMGFAWF, TGFCGGLTTFSTFSAEVVFLL, and VFVNLLGSFAMTALAFWLFSA. Positions 75 and 78 each coordinate Na(+).

This sequence belongs to the fluoride channel Fluc/FEX (TC 1.A.43) family.

It is found in the cell inner membrane. The enzyme catalyses fluoride(in) = fluoride(out). With respect to regulation, na(+) is not transported, but it plays an essential structural role and its presence is essential for fluoride channel function. Its function is as follows. Fluoride-specific ion channel. Important for reducing fluoride concentration in the cell, thus reducing its toxicity. The sequence is that of Fluoride-specific ion channel FluC from Escherichia coli (strain ATCC 8739 / DSM 1576 / NBRC 3972 / NCIMB 8545 / WDCM 00012 / Crooks).